A 254-amino-acid chain; its full sequence is Small ribosomal subunit protein uS2 (254 aa).

The segment at 228 to 254 is disordered; the sequence is DRGAEKEVEAAEEAPAAEAEAAPATEE. The span at 240 to 254 shows a compositional bias: low complexity; it reads EAPAAEAEAAPATEE.

Belongs to the universal ribosomal protein uS2 family.

The protein is Small ribosomal subunit protein uS2 of Flavobacterium johnsoniae (strain ATCC 17061 / DSM 2064 / JCM 8514 / BCRC 14874 / CCUG 350202 / NBRC 14942 / NCIMB 11054 / UW101) (Cytophaga johnsonae).